We begin with the raw amino-acid sequence, 100 residues long: NADH-quinone oxidoreductase subunit K (100 aa).

3 helical membrane passes run 1-21 (MIGLNHYLIVSGLLFCIGLAG), 28-48 (ILLLFFSTEIMLNAINIGFVA), and 64-84 (FIIAIAASEVAIGLGLVILWF).

It belongs to the complex I subunit 4L family. NDH-1 is composed of 14 different subunits. Subunits NuoA, H, J, K, L, M, N constitute the membrane sector of the complex.

It is found in the cell inner membrane. It catalyses the reaction a quinone + NADH + 5 H(+)(in) = a quinol + NAD(+) + 4 H(+)(out). Its function is as follows. NDH-1 shuttles electrons from NADH, via FMN and iron-sulfur (Fe-S) centers, to quinones in the respiratory chain. The immediate electron acceptor for the enzyme in this species is believed to be ubiquinone. Couples the redox reaction to proton translocation (for every two electrons transferred, four hydrogen ions are translocated across the cytoplasmic membrane), and thus conserves the redox energy in a proton gradient. The protein is NADH-quinone oxidoreductase subunit K of Helicobacter pylori (strain B38).